Reading from the N-terminus, the 393-residue chain is Endoglucanase 1 (393 aa).

A signal peptide spans 1-26 (MAFKLNIGLLALSLSLSLVHLDGVRA). The active-site Nucleophile is the Asp-34. The active-site Proton donor is Asp-152. A disordered region spans residues 233–393 (GCQRKDDNTI…GGHKKCHKKH (161 aa)). Low complexity-rich tracts occupy residues 319-329 (QGSSNGDATTG) and 337-370 (DSGS…NPGA). Asn-343 carries N-linked (GlcNAc...) asparagine glycosylation. Positions 371–384 (AQGGQGGAQPGPSG) are enriched in gly residues.

It belongs to the glycosyl hydrolase 45 (cellulase K) family. In terms of processing, may also be O-glycosylated. As to expression, hyphal tip.

It localises to the secreted. It carries out the reaction Endohydrolysis of (1-&gt;4)-beta-D-glucosidic linkages in cellulose, lichenin and cereal beta-D-glucans.. The polypeptide is Endoglucanase 1 (EGL1) (Mycosarcoma maydis (Corn smut fungus)).